The following is a 199-amino-acid chain: HTH-type transcriptional regulator BetI (199 aa).

Positions 8-68 (EIRKPQLVKA…ETMREILRQL (61 aa)) constitute an HTH tetR-type domain. Positions 31-50 (SISLISKEAGVSTGIINHYF) form a DNA-binding region, H-T-H motif.

The protein operates within amine and polyamine biosynthesis; betaine biosynthesis via choline pathway [regulation]. Functionally, repressor involved in the biosynthesis of the osmoprotectant glycine betaine. It represses transcription of the choline transporter BetT and the genes of BetAB involved in the synthesis of glycine betaine. The polypeptide is HTH-type transcriptional regulator BetI (Vibrio parahaemolyticus serotype O3:K6 (strain RIMD 2210633)).